The following is a 256-amino-acid chain: Protein CC2D2B homolog (256 aa).

The segment at 1–24 (MSEEMDNVTAEEITDKHLQKDLDA) is disordered. The span at 13-22 (ITDKHLQKDL) shows a compositional bias: basic and acidic residues. Coiled coils occupy residues 136 to 159 (DLLK…KANI) and 194 to 214 (EIYK…EEGK).

The chain is Protein CC2D2B homolog from Macaca fascicularis (Crab-eating macaque).